The chain runs to 176 residues: Inner membrane-spanning protein YciB (176 aa).

Helical transmembrane passes span F3–F23, T49–H69, K72–A92, K118–V138, and F149–L169.

The protein belongs to the YciB family.

The protein localises to the cell inner membrane. Its function is as follows. Plays a role in cell envelope biogenesis, maintenance of cell envelope integrity and membrane homeostasis. This chain is Inner membrane-spanning protein YciB, found in Burkholderia mallei (strain NCTC 10247).